Consider the following 226-residue polypeptide: uncharacterized protein (226 aa).

The HTH cro/C1-type domain maps to 168–226 (ISALRNKLGLTQTDLGKRINVDANVIRNIETGDLVAFNVQDPMVRSLAYALGIRTIKYQ). The H-T-H motif DNA-binding region spans 179–198 (QTDLGKRINVDANVIRNIET).

This is an uncharacterized protein from Acanthamoeba polyphaga mimivirus (APMV).